We begin with the raw amino-acid sequence, 156 residues long: Small ribosomal subunit protein uS7 (156 aa).

This sequence belongs to the universal ribosomal protein uS7 family. In terms of assembly, part of the 30S ribosomal subunit. Contacts proteins S9 and S11.

In terms of biological role, one of the primary rRNA binding proteins, it binds directly to 16S rRNA where it nucleates assembly of the head domain of the 30S subunit. Is located at the subunit interface close to the decoding center, probably blocks exit of the E-site tRNA. This chain is Small ribosomal subunit protein uS7, found in Sinorhizobium medicae (strain WSM419) (Ensifer medicae).